Reading from the N-terminus, the 126-residue chain is 3-aminobutyryl-CoA ammonia lyase (126 aa).

Belongs to the KAL family. In terms of assembly, homohexamer.

The enzyme catalyses (3S)-3-aminobutanoyl-CoA = (2E)-butenoyl-CoA + NH4(+). It functions in the pathway amino-acid degradation; L-lysine degradation via acetate pathway. Involved in the anaerobic fermentation of lysine. Catalyzes the deamination of L-3-aminobutyryl-CoA to produce crotonoyl-CoA. The protein is 3-aminobutyryl-CoA ammonia lyase of Acetoanaerobium sticklandii (strain ATCC 12662 / DSM 519 / JCM 1433 / CCUG 9281 / NCIMB 10654 / HF) (Clostridium sticklandii).